The sequence spans 248 residues: MENFKGLQKSLYIWTDSADLDKRVQQLKSATGGDVALENVHRLSFSSYANSSFDLIVIECAQLTDSYVKLLHMLKPSGKLHLVSFIGPAASLLQEIKLSGFINCREDSPDALTAEKPGYETGSSARLSFAKKNASAVNVWKISGDDEELIDEEELLDEEDKQKPDPAGLRVCSTTGKRKACKNCSCGLAEELETEKQSQKANETAKSSCGNCYLGDAFRCSTCPYLGMPAFKPGEKVQLGDNLLKSDI.

The tract at residues 4–129 (FKGLQKSLYI…ETGSSARLSF (126 aa)) is N-terminal SAM-like domain. The segment at 130–161 (AKKNASAVNVWKISGDDEELIDEEELLDEEDK) is linker. Residues Cys-172, Cys-181, Cys-184, and Cys-186 each contribute to the [2Fe-2S] cluster site. The segment at 172-186 (CSTTGKRKACKNCSC) is fe-S binding site A. Residues Cys-209, Cys-212, Cys-220, and Cys-223 each contribute to the [4Fe-4S] cluster site. 2 consecutive short sequence motifs (cx2C motif) follow at residues 209–212 (CGNC) and 220–223 (CSTC). The tract at residues 209–223 (CGNCYLGDAFRCSTC) is fe-S binding site B.

This sequence belongs to the anamorsin family. As to quaternary structure, monomer. [2Fe-2S] cluster is required as a cofactor. The cofactor is [4Fe-4S] cluster.

It localises to the cytoplasm. It is found in the mitochondrion intermembrane space. Its function is as follows. Component of the cytosolic iron-sulfur (Fe-S) protein assembly (CIA) machinery. Required for the maturation of extramitochondrial Fe-S proteins. Part of an electron transfer chain functioning in an early step of cytosolic Fe-S biogenesis, facilitating the de novo assembly of a [4Fe-4S] cluster on the cytosolic Fe-S scaffold complex. Electrons are transferred from NADPH via a FAD- and FMN-containing diflavin oxidoreductase. Together with the diflavin oxidoreductase, also required for the assembly of the diferric tyrosyl radical cofactor of ribonucleotide reductase (RNR), probably by providing electrons for reduction during radical cofactor maturation in the catalytic small subunit. In Drosophila yakuba (Fruit fly), this protein is Anamorsin homolog.